Reading from the N-terminus, the 726-residue chain is Methyltransferase FGSG_00040 (726 aa).

TPR repeat units follow at residues 187 to 220 (SSDIRKQGKGAVQSKKWAEALRLYSSAIQAGQNV), 224 to 257 (QLAFLNRSFVNMNMDRPKQALLDAEKATNPAMPS), and 258 to 291 (EKSLFRKARALYELGDYQQSLEMLEKLTQSYPEN). The SET domain occupies 336 to 531 (APVEIRESPG…AKTEIFFCYR (196 aa)). Position 530 (Tyr530) interacts with S-adenosyl-L-methionine.

It belongs to the class V-like SAM-binding methyltransferase superfamily.

It functions in the pathway mycotoxin biosynthesis. In terms of biological role, methyltransferase; part of the gene cluster that mediates the biosynthesis of gramillins A and B, bicyclic lipopeptides that induce cell death in maize leaves but not in wheat leaves. The nonribosomal peptide synthetase GRA1 incorporates respectively a glutamic adic (Glu), a leucine (Leu), a serine (Ser), a hydroxyglutamine (HOGln), a 2-amino decanoic acid, and 2 cysteins (CysB and CysA). The biosynthesis of 2-amino decanoic acid incorporated in gramillins could be initiated by a fatty acid synthase composed of the alpha and beta subunits FGSG_00036 and FGSG_11656. The cytochrome P450 monooxygenase FGSG_15680 could hydroxylate the fatty acid chain. Subsequent oxidation to the ketone by the oxidoreductase FGSG_00048 and transamination by aminotransferase FGSG_00049 could form 2-amino-decanoic acid. On the other hand, FGSG_15680 could also be responsible for the HO-modified glutamine at the gamma-position. Whether hydroxylation occurs on the fully assembled product or on the Gln residue prior to assembly into the gramillins requires further proof. The thioredoxin FGSG_00043 could also be required for the disulfide-bond formation between CysA and CysB. The specific involvement of the remaining proteins from the cluster is more difficult to discern, but could have broader regulatory (FGSG_00040 and FGSG_11657) or enzymatic functions (FGSG_00044 and FGSG_00045). The final C-domain of GRA1 does not possess the expected sequence of a termination CT domain, often implicated in macrocyclization and release of a cyclopeptidein fungal NRPs; and the thioesterase FGSG_00047 may act in concert with the terminal C-domain of GRA1 to catalyze the formation of the macrocyclic anhydride and release of the products. The protein is Methyltransferase FGSG_00040 of Gibberella zeae (strain ATCC MYA-4620 / CBS 123657 / FGSC 9075 / NRRL 31084 / PH-1) (Wheat head blight fungus).